The chain runs to 230 residues: Orotidine 5'-phosphate decarboxylase (230 aa).

Substrate-binding positions include D11, K34, 61–70, T117, R179, Q188, G208, and R209; that span reads DLKLHDIPNT. Catalysis depends on K63, which acts as the Proton donor.

Belongs to the OMP decarboxylase family. Type 1 subfamily. Homodimer.

The enzyme catalyses orotidine 5'-phosphate + H(+) = UMP + CO2. The protein operates within pyrimidine metabolism; UMP biosynthesis via de novo pathway; UMP from orotate: step 2/2. Its function is as follows. Catalyzes the decarboxylation of orotidine 5'-monophosphate (OMP) to uridine 5'-monophosphate (UMP). The sequence is that of Orotidine 5'-phosphate decarboxylase from Streptococcus pyogenes serotype M1.